The following is a 917-amino-acid chain: MFAVHLMAFYFSKLKEDQIKKVDRFLYHMRLSDDTLLDIMRRFRAEMEKGLAKDTNPTAAVKMLPTFVRAIPDGSENGEFLSLDLGGSKFRVLKVQVAEEGKRHVQMESQFYPTPNEIIRGNGTELFEYVADCLADFMKTKDLKHKKLPLGLTFSFPCRQTKLEEGVLLSWTKKFKARGVQDTDVVSRLTKAMRRHKDMDVDILALVNDTVGTMMTCAYDDPYCEVGVIIGTGTNACYMEDMSNIDLVEGDEGRMCINTEWGAFGDDGALEDIRTEFDRELDLGSLNPGKQLFEKMISGLYLGELVRLILLKMAKAGLLFGGEKSSALHTKGKIETRHVAAMEKYKEGLANTREILVDLGLEPSEADCIAVQHVCTIVSFRSANLCAAALAAILTRLRENKKVERLRTTVGMDGTLYKIHPQYPKRLHKVVRKLVPSCDVRFLLSESGSTKGAAMVTAVASRVQAQRKQIDRVLALFQLTREQLVDVQAKMRAELEYGLKKKSHGLATVRMLPTYVCGLPDGTEKGKFLALDLGGTNFRVLLVKIRSGRRSVRMYNKIFAIPLEIMQGTGEELFDHIVQCIADFLDYMGLKGASLPLGFTFSFPCRQMSIDKGTLIGWTKGFKATDCEGEDVVDMLREAIKRRNEFDLDIVAVVNDTVGTMMTCGYEDPNCEIGLIAGTGSNMCYMEDMRNIEMVEGGEGKMCINTEWGGFGDNGCIDDIWTRYDTEVDEGSLNPGKQRYEKMTSGMYLGEIVRQILIDLTKQGLLFRGQISERLRTRGIFETKFLSQIESDRLALLQVRRILQQLGLDSTCEDSIVVKEVCGAVSRRAAQLCGAGLAAIVEKRREDQGLEHLRITVGVDGTLYKLHPHFSRILQETVKELAPRCDVTFMLSEDGSGKGAALITAVAKRLQQAQKEN.

Residues 1–20 (MFAVHLMAFYFSKLKEDQIK) form a mitochondrial-binding peptide (MBP) region. Hexokinase domains are found at residues 16–458 (EDQI…MVTA) and 464–905 (QAQR…LITA). Residues R30 and 84-89 (DLGGSK) contribute to the ATP site. The tract at residues 73–207 (DGSENGEFLS…DMDVDILALV (135 aa)) is hexokinase small subdomain 1. 84–91 (DLGGSKFR) is a binding site for D-glucose 6-phosphate. D-glucose is bound by residues S155, 172-173 (TK), and 208-209 (ND). The segment at 208 to 447 (NDTVGTMMTC…CDVRFLLSES (240 aa)) is hexokinase large subdomain 1. D-glucose 6-phosphate is bound by residues D209 and T232. Residues N235, E260, and 291 to 294 (QLFE) contribute to the D-glucose site. Residue 413-415 (DGT) coordinates D-glucose 6-phosphate. An ATP-binding site is contributed by 425 to 426 (KR). Residues S449 and 532–536 (DLGGT) contribute to the D-glucose 6-phosphate site. The hexokinase small subdomain 2 stretch occupies residues 521-654 (DGTEKGKFLA…EFDLDIVAVV (134 aa)). Residue 532–537 (DLGGTN) coordinates ATP. Residues 602–603 (SF), 619–620 (TK), and 655–656 (ND) each bind D-glucose. The interval 655–894 (NDTVGTMMTC…CDVTFMLSED (240 aa)) is hexokinase large subdomain 2. D656 and T679 together coordinate D-glucose 6-phosphate. T679 provides a ligand contact to ATP. D-glucose is bound by residues 681 to 682 (SN), E707, and E741. Residues 746-747 (GM), 783-787 (TKFLS), and 862-866 (TLYKL) each bind ATP. D-glucose 6-phosphate is bound by residues 860-862 (DGT) and S896.

The protein belongs to the hexokinase family. As to expression, widely expressed. Highly expressed in the brush border, surface epithelium and the myenteric plexus of the small and large intestines; the acinar centrocytes and interlobular ducts of the pancreas; and the alveolar macrophages in the lungs (at protein level). Present at moderate level in the thyroid follicular epithelium (at protein level).

The protein resides in the cytoplasm. It is found in the mitochondrion membrane. Its subcellular location is the photoreceptor inner segment. It catalyses the reaction a D-hexose + ATP = a D-hexose 6-phosphate + ADP + H(+). The enzyme catalyses D-glucose + ATP = D-glucose 6-phosphate + ADP + H(+). It participates in carbohydrate metabolism; hexose metabolism. It functions in the pathway carbohydrate degradation; glycolysis; D-glyceraldehyde 3-phosphate and glycerone phosphate from D-glucose: step 1/4. Catalyzes the phosphorylation of hexose to hexose 6-phosphate, although at very low level compared to other hexokinases. Has low glucose phosphorylating activity compared to other hexokinases. Involved in glucose homeostasis and hepatic lipid accumulation. Required to maintain whole-body glucose homeostasis during pregnancy; however additional evidences are required to confirm this role. The polypeptide is Hexokinase HKDC1 (Homo sapiens (Human)).